A 133-amino-acid polypeptide reads, in one-letter code: ATP synthase epsilon chain, chloroplastic (133 aa).

It belongs to the ATPase epsilon chain family. As to quaternary structure, F-type ATPases have 2 components, CF(1) - the catalytic core - and CF(0) - the membrane proton channel. CF(1) has five subunits: alpha(3), beta(3), gamma(1), delta(1), epsilon(1). CF(0) has three main subunits: a, b and c.

The protein localises to the plastid. The protein resides in the chloroplast thylakoid membrane. Functionally, produces ATP from ADP in the presence of a proton gradient across the membrane. This is ATP synthase epsilon chain, chloroplastic from Vitis vinifera (Grape).